Here is a 174-residue protein sequence, read N- to C-terminus: Peptide methionine sulfoxide reductase MsrA (174 aa).

Cysteine 10 is an active-site residue.

This sequence belongs to the MsrA Met sulfoxide reductase family.

The enzyme catalyses L-methionyl-[protein] + [thioredoxin]-disulfide + H2O = L-methionyl-(S)-S-oxide-[protein] + [thioredoxin]-dithiol. It catalyses the reaction [thioredoxin]-disulfide + L-methionine + H2O = L-methionine (S)-S-oxide + [thioredoxin]-dithiol. Has an important function as a repair enzyme for proteins that have been inactivated by oxidation. Catalyzes the reversible oxidation-reduction of methionine sulfoxide in proteins to methionine. The protein is Peptide methionine sulfoxide reductase MsrA of Arthrobacter sp. (strain FB24).